The chain runs to 667 residues: MKVSDRRKFEKANFDEFESALNNKNDLVHCPSITLFESIPTEVRSFYEDEKSGLIKVVKFRTGAMDRKRSFEKIVVSVMVGKNVQKFLTFVEDEPDFQGGPIPSKYLIPKKINLMVYTLFQVHTLKFNRKDYDTLSLFYLNRGYYNELSFRVLERCYEIASARPNDSSTMRTFTDFVSGTPIVRSLQKSTIRKYGYNLAPYMFLLLHVDELSIFSAYQASLPGEKKVDTERLKRDLCPRKPTEIKYFSQICNDMMNKKDRLGDVLATAQRIRRRYNKNGSSEPRLKTLDGLTSERWIQWLGLESDYHCSFSSTRNAEDVVAGEAASSDHDQKISRVTRKRPREPKSTNDILVAGRKLFGSSFEFRDLHQLRLCHEIYMADTPSVAVQAPPGYGKTELFHLPLIALASKGDVKYVSFLFVPYTVLLANCMIRLGRRGCLNVAPVRNFIEEGCDGVTDLYVGIYDDLASTNFTDRIAAWENIVECTFRTNNVKLGYLIVDEFHNFETEVYRQSQFGGITNLDFDAFEKAIFLSGTAPEAVADAALQRIGLTGLAKKSMDINELKRSEDLSRGLSSYPTRMFNLIKEKSEVPLGHVHKIWKKVESQPEEALKLLLALFEIEPESKAIVVASTTNEVEELACSWRKYFRVVWIHGKLGCCRKGVSHKGVCH.

The tract at residues 321 to 345 (AGEAASSDHDQKISRVTRKRPREPK) is disordered. Residues 375–552 (EIYMADTPSV…LQRIGLTGLA (178 aa)) enclose the Helicase ATP-binding domain. 388 to 395 (APPGYGKT) is an ATP binding site. A DEAH box motif is present at residues 498–501 (DEFH).

The protein belongs to the helicase family. Yeast subtelomeric Y' repeat subfamily.

This is an uncharacterized protein from Saccharomyces cerevisiae (strain ATCC 204508 / S288c) (Baker's yeast).